Here is a 443-residue protein sequence, read N- to C-terminus: 3-isopropylmalate dehydratase large subunit (443 aa).

Residues Cys-347, Cys-407, and Cys-410 each coordinate [4Fe-4S] cluster.

The protein belongs to the aconitase/IPM isomerase family. LeuC type 1 subfamily. As to quaternary structure, heterodimer of LeuC and LeuD. [4Fe-4S] cluster is required as a cofactor.

It catalyses the reaction (2R,3S)-3-isopropylmalate = (2S)-2-isopropylmalate. Its pathway is amino-acid biosynthesis; L-leucine biosynthesis; L-leucine from 3-methyl-2-oxobutanoate: step 2/4. Catalyzes the isomerization between 2-isopropylmalate and 3-isopropylmalate, via the formation of 2-isopropylmaleate. The sequence is that of 3-isopropylmalate dehydratase large subunit from Buchnera aphidicola subsp. Uroleucon sonchi.